Here is a 451-residue protein sequence, read N- to C-terminus: DNA-directed RNA polymerase subunit Rpo1C (451 aa).

The tract at residues 1–68 (MQDIIGKIED…DDDELLDAVE (68 aa)) is unknown. A DNA-directed RNA polymerase subunit Rpo1C region spans residues 69-451 (DDYQRILKVQ…SVSVVMKERK (383 aa)).

Belongs to the RNA polymerase beta' chain family. Part of the RNA polymerase complex.

It is found in the cytoplasm. The catalysed reaction is RNA(n) + a ribonucleoside 5'-triphosphate = RNA(n+1) + diphosphate. Functionally, DNA-dependent RNA polymerase (RNAP) catalyzes the transcription of DNA into RNA using the four ribonucleoside triphosphates as substrates. Forms part of the jaw domain. The protein is DNA-directed RNA polymerase subunit Rpo1C of Methanothermobacter thermautotrophicus (strain ATCC 29096 / DSM 1053 / JCM 10044 / NBRC 100330 / Delta H) (Methanobacterium thermoautotrophicum).